The chain runs to 351 residues: Prostaglandin reductase 2 (351 aa).

A substrate-binding site is contributed by 99–100; the sequence is FY. NADP(+) is bound by residues 165–168, lysine 192, tyrosine 208, asparagine 231, 253–259, 287–289, and asparagine 337; these read GACG, CGQISQY, and FLV. 288–290 contacts substrate; the sequence is LVL.

This sequence belongs to the NADP-dependent oxidoreductase L4BD family. As to quaternary structure, monomer.

It is found in the cytoplasm. The catalysed reaction is 13,14-dihydro-15-oxo-prostaglandin E2 + NAD(+) = 15-oxoprostaglandin E2 + NADH + H(+). It catalyses the reaction 13,14-dihydro-15-oxo-prostaglandin E2 + NADP(+) = 15-oxoprostaglandin E2 + NADPH + H(+). The enzyme catalyses 13,14-dihydro-15-oxo-PGF2alpha + NADP(+) = 15-oxoprostaglandin F2alpha + NADPH + H(+). It carries out the reaction 13,14-dihydro-15-oxo-prostaglandin E1 + NADP(+) = 15-oxoprostaglandin E1 + NADPH + H(+). The catalysed reaction is 13,14-dihydro-15-oxo-prostaglandin F1alpha + NADP(+) = 15-oxoprostaglandin F1alpha + NADPH + H(+). Functions as 15-oxo-prostaglandin 13-reductase and acts on 15-keto-PGE1, 15-keto-PGE2, 15-keto-PGE1-alpha and 15-keto-PGE2-alpha with highest activity towards 15-keto-PGE2. Overexpression represses transcriptional activity of PPARG and inhibits adipocyte differentiation. This Bos taurus (Bovine) protein is Prostaglandin reductase 2 (PTGR2).